Consider the following 26-residue polypeptide: uncharacterized protein (26 aa).

A helical transmembrane segment spans residues 3–23; it reads IIYLILFLIVIYLLYRILDVL.

Its subcellular location is the membrane. This is an uncharacterized protein from Helicobacter pylori (strain J99 / ATCC 700824) (Campylobacter pylori J99).